Here is a 309-residue protein sequence, read N- to C-terminus: GATA transcription factor 25 (309 aa).

The segment at 1–35 (MFGRHSIIPNNQIGTASASAGEDHVSASATSGHIP) is disordered. A compositionally biased stretch (polar residues) spans 8–18 (IPNNQIGTASA). The region spanning 77-112 (PPEGANQLTISFRGQVYVFDAVGADKVDAVLSLLGG) is the Tify domain. A CCT domain is found at 146 to 188 (RAQSLDRFRKKRNARCFEKKVRYGVRQEVALRMARNKGQFTSS). The span at 187–202 (SSKMTDGAYNSGTDQD) shows a compositional bias: polar residues. The segment at 187–207 (SSKMTDGAYNSGTDQDSAQDD) is disordered. Residues 208–267 (AHPEISCTHCGISSKCTPMMRRGPSGPRTLCNACGLFWANRGTLRDLSKKTEENQLALMK) form a GATA-type zinc finger. Positions 290-309 (EHTSMVSLANGDNSNLLGDH) are disordered. Residues 293–309 (SMVSLANGDNSNLLGDH) are compositionally biased toward polar residues.

It belongs to the type IV zinc-finger family. Class C subfamily. In terms of tissue distribution, predominantly expressed in shoot apices, inflorescences and roots.

The protein localises to the nucleus. Functionally, transcriptional activator that specifically binds 5'-GATA-3' or 5'-GAT-3' motifs within gene promoters. This chain is GATA transcription factor 25 (GATA25), found in Arabidopsis thaliana (Mouse-ear cress).